The chain runs to 92 residues: Acylphosphatase (92 aa).

The Acylphosphatase-like domain occupies 6–92 (RMYVIVYGIV…TGEFASFDTY (87 aa)). Residues Arg-21 and Asn-39 contribute to the active site.

This sequence belongs to the acylphosphatase family.

It carries out the reaction an acyl phosphate + H2O = a carboxylate + phosphate + H(+). This is Acylphosphatase (acyP) from Sulfolobus acidocaldarius (strain ATCC 33909 / DSM 639 / JCM 8929 / NBRC 15157 / NCIMB 11770).